The primary structure comprises 522 residues: Probable protein kinase UbiB (522 aa).

The region spanning 119–497 (SFERVPVASA…QRRTNRLLQS (379 aa)) is the Protein kinase domain. Residues 125-133 (VASASIAQV) and lysine 151 contribute to the ATP site. Aspartate 286 serves as the catalytic Proton acceptor. Residues 496–516 (QSIIYGGMGFVLGLLALQFLI) form a helical membrane-spanning segment.

Belongs to the ABC1 family. UbiB subfamily.

Its subcellular location is the cell inner membrane. It functions in the pathway cofactor biosynthesis; ubiquinone biosynthesis [regulation]. Functionally, is probably a protein kinase regulator of UbiI activity which is involved in aerobic coenzyme Q (ubiquinone) biosynthesis. The chain is Probable protein kinase UbiB from Paracidovorax citrulli (strain AAC00-1) (Acidovorax citrulli).